The primary structure comprises 385 residues: Probable tRNA sulfurtransferase (385 aa).

The region spanning Asp-57 to Lys-160 is the THUMP domain. ATP contacts are provided by residues Met-180–Leu-181, Tyr-205–Tyr-206, Arg-262, Gly-284, and Gln-293.

It belongs to the ThiI family.

It localises to the cytoplasm. It carries out the reaction [ThiI sulfur-carrier protein]-S-sulfanyl-L-cysteine + a uridine in tRNA + 2 reduced [2Fe-2S]-[ferredoxin] + ATP + H(+) = [ThiI sulfur-carrier protein]-L-cysteine + a 4-thiouridine in tRNA + 2 oxidized [2Fe-2S]-[ferredoxin] + AMP + diphosphate. The catalysed reaction is [ThiS sulfur-carrier protein]-C-terminal Gly-Gly-AMP + S-sulfanyl-L-cysteinyl-[cysteine desulfurase] + AH2 = [ThiS sulfur-carrier protein]-C-terminal-Gly-aminoethanethioate + L-cysteinyl-[cysteine desulfurase] + A + AMP + 2 H(+). Its pathway is cofactor biosynthesis; thiamine diphosphate biosynthesis. In terms of biological role, catalyzes the ATP-dependent transfer of a sulfur to tRNA to produce 4-thiouridine in position 8 of tRNAs, which functions as a near-UV photosensor. Also catalyzes the transfer of sulfur to the sulfur carrier protein ThiS, forming ThiS-thiocarboxylate. This is a step in the synthesis of thiazole, in the thiamine biosynthesis pathway. The sulfur is donated as persulfide by IscS. In Clostridium perfringens (strain 13 / Type A), this protein is Probable tRNA sulfurtransferase.